A 367-amino-acid chain; its full sequence is Protein RecA (367 aa).

73–80 (GPESSGKT) is a binding site for ATP.

The protein belongs to the RecA family.

The protein resides in the cytoplasm. Can catalyze the hydrolysis of ATP in the presence of single-stranded DNA, the ATP-dependent uptake of single-stranded DNA by duplex DNA, and the ATP-dependent hybridization of homologous single-stranded DNAs. It interacts with LexA causing its activation and leading to its autocatalytic cleavage. The sequence is that of Protein RecA from Delftia acidovorans (strain DSM 14801 / SPH-1).